We begin with the raw amino-acid sequence, 494 residues long: Syntaphilin (494 aa).

The interval 1-75 (MAMSLPGSRR…GIKPPTPEQY (75 aa)) is disordered. The segment covering 7–49 (GSRRTSAGSRRRTSPPVSVRDAYGTSSLSSSSNSGSYKGSDSS) has biased composition (low complexity). The stretch at 79 to 161 (LQQKEVCIRH…VKNNLIDKDK (83 aa)) forms a coiled coil. 2 disordered regions span residues 191-246 (MAKE…SGFA) and 338-398 (CGTD…GQSV). A phosphoserine mark is found at S200 and S204. Residues 207–217 (RSLTRSSTYTK) show a composition bias toward polar residues. T214 is modified (phosphothreonine). A Phosphoserine modification is found at S219. Positions 230-246 (GDPSSGSAEDGADSGFA) are enriched in low complexity. Basic and acidic residues predominate over residues 344-353 (SGDRCPELDA). A helical transmembrane segment spans residues 425–444 (YIVDLLAVVVPAVPTVAWLC).

As to quaternary structure, binds to STX1A. Interacts with DNM1; this interaction inhibits the binding of DNM1 to AMPH and DNM1-receptor-mediated endocytosis. As to expression, brain specific. Found in synapses.

It localises to the membrane. Its subcellular location is the synapse. It is found in the synaptosome. Functionally, inhibits SNARE complex formation by absorbing free STX1A. This chain is Syntaphilin, found in Homo sapiens (Human).